Reading from the N-terminus, the 283-residue chain is Thymidylate synthase (283 aa).

Arg22 serves as a coordination point for dUMP. Catalysis depends on Cys160, which acts as the Nucleophile. DUMP is bound by residues 180 to 183 (RSCD), Asn191, and 221 to 223 (HIY). Asp183 contributes to the (6R)-5,10-methylene-5,6,7,8-tetrahydrofolate binding site. (6R)-5,10-methylene-5,6,7,8-tetrahydrofolate is bound at residue Ser282.

Belongs to the thymidylate synthase family. Bacterial-type ThyA subfamily. Homodimer.

It is found in the cytoplasm. The catalysed reaction is dUMP + (6R)-5,10-methylene-5,6,7,8-tetrahydrofolate = 7,8-dihydrofolate + dTMP. Its pathway is pyrimidine metabolism; dTTP biosynthesis. In terms of biological role, catalyzes the reductive methylation of 2'-deoxyuridine-5'-monophosphate (dUMP) to 2'-deoxythymidine-5'-monophosphate (dTMP) while utilizing 5,10-methylenetetrahydrofolate (mTHF) as the methyl donor and reductant in the reaction, yielding dihydrofolate (DHF) as a by-product. This enzymatic reaction provides an intracellular de novo source of dTMP, an essential precursor for DNA biosynthesis. The protein is Thymidylate synthase of Vibrio vulnificus (strain YJ016).